The sequence spans 382 residues: UDP-N-acetylglucosamine--N-acetylmuramyl-(pentapeptide) pyrophosphoryl-undecaprenol N-acetylglucosamine transferase (382 aa).

UDP-N-acetyl-alpha-D-glucosamine contacts are provided by residues 11 to 13 (TGG), Asn-124, Arg-164, Ser-192, and Gln-314.

The protein belongs to the glycosyltransferase 28 family. MurG subfamily.

The protein localises to the cell membrane. The catalysed reaction is di-trans,octa-cis-undecaprenyl diphospho-N-acetyl-alpha-D-muramoyl-L-alanyl-D-glutamyl-meso-2,6-diaminopimeloyl-D-alanyl-D-alanine + UDP-N-acetyl-alpha-D-glucosamine = di-trans,octa-cis-undecaprenyl diphospho-[N-acetyl-alpha-D-glucosaminyl-(1-&gt;4)]-N-acetyl-alpha-D-muramoyl-L-alanyl-D-glutamyl-meso-2,6-diaminopimeloyl-D-alanyl-D-alanine + UDP + H(+). Its pathway is cell wall biogenesis; peptidoglycan biosynthesis. Its function is as follows. Cell wall formation. Catalyzes the transfer of a GlcNAc subunit on undecaprenyl-pyrophosphoryl-MurNAc-pentapeptide (lipid intermediate I) to form undecaprenyl-pyrophosphoryl-MurNAc-(pentapeptide)GlcNAc (lipid intermediate II). This is UDP-N-acetylglucosamine--N-acetylmuramyl-(pentapeptide) pyrophosphoryl-undecaprenol N-acetylglucosamine transferase from Deinococcus deserti (strain DSM 17065 / CIP 109153 / LMG 22923 / VCD115).